Here is a 499-residue protein sequence, read N- to C-terminus: Glycerol kinase (499 aa).

Thr17 serves as a coordination point for ADP. Residues Thr17, Thr18, and Ser19 each contribute to the ATP site. Thr17 contacts sn-glycerol 3-phosphate. Arg21 contributes to the ADP binding site. Sn-glycerol 3-phosphate contacts are provided by Arg87, Glu88, Tyr139, and Asp243. Glycerol is bound by residues Arg87, Glu88, Tyr139, Asp243, and Gln244. Thr265 and Gly308 together coordinate ADP. The ATP site is built by Thr265, Gly308, Gln312, and Gly409. ADP contacts are provided by Gly409 and Asn413.

Belongs to the FGGY kinase family.

It carries out the reaction glycerol + ATP = sn-glycerol 3-phosphate + ADP + H(+). It functions in the pathway polyol metabolism; glycerol degradation via glycerol kinase pathway; sn-glycerol 3-phosphate from glycerol: step 1/1. With respect to regulation, inhibited by fructose 1,6-bisphosphate (FBP). Key enzyme in the regulation of glycerol uptake and metabolism. Catalyzes the phosphorylation of glycerol to yield sn-glycerol 3-phosphate. The chain is Glycerol kinase from Pseudomonas entomophila (strain L48).